Consider the following 37-residue polypeptide: Photosystem II reaction center protein Y (37 aa).

Residues 4–22 (AIVVFAPIIAAVAWVVFNI) form a helical membrane-spanning segment.

It belongs to the PsbY family. As to quaternary structure, PSII is composed of 1 copy each of membrane proteins PsbA, PsbB, PsbC, PsbD, PsbE, PsbF, PsbH, PsbI, PsbJ, PsbK, PsbL, PsbM, PsbT, PsbX, PsbY, Psb30/Ycf12, peripheral proteins PsbO, CyanoQ (PsbQ), PsbU, PsbV and a large number of cofactors. It forms dimeric complexes.

It localises to the cellular thylakoid membrane. In terms of biological role, loosely associated component of the core of photosystem II (PSII), it is not always seen in crystals. PSII is a light-driven water plastoquinone oxidoreductase, using light energy to abstract electrons from H(2)O, generating a proton gradient subsequently used for ATP formation. This chain is Photosystem II reaction center protein Y, found in Prochlorococcus marinus (strain MIT 9312).